Reading from the N-terminus, the 416-residue chain is Alpha-1-antiproteinase (416 aa).

The N-terminal stretch at 1–24 is a signal peptide; the sequence is MALSITRGLLLLAALCCLAPISLA. N-linked (GlcNAc...) asparagine glycans are attached at residues N68, N105, N143, and N269. Residues 371 to 390 are RCL; sequence GSTFLEAIPMSLPPDVEFNR. The residue at position 381 (S381) is a Phosphoserine.

Belongs to the serpin family. In terms of assembly, interacts with CELA2A. Interacts with ERGIC3 and LMAN1/ERGIC53. Interacts with PRSS1/Trypsin. As to expression, plasma.

The protein localises to the secreted. Functionally, inhibitor of serine proteases. Its primary target is elastase, but it also has a moderate affinity for plasmin and thrombin. Inhibits trypsin, chymotrypsin and plasminogen activator. In Bos taurus (Bovine), this protein is Alpha-1-antiproteinase (SERPINA1).